A 402-amino-acid chain; its full sequence is Deoxyguanosinetriphosphate triphosphohydrolase-like protein (402 aa).

Residues R73–N217 enclose the HD domain.

It belongs to the dGTPase family. Type 2 subfamily.

In Brucella anthropi (strain ATCC 49188 / DSM 6882 / CCUG 24695 / JCM 21032 / LMG 3331 / NBRC 15819 / NCTC 12168 / Alc 37) (Ochrobactrum anthropi), this protein is Deoxyguanosinetriphosphate triphosphohydrolase-like protein.